Here is a 367-residue protein sequence, read N- to C-terminus: MRRMLVIRWILAIHLIATQVFAERIKDIATLAGVRVNQLVGYGLVVGLSGTGDKTGTKFTEDSFANMLTQLGINIPPGVRLNSKNIAAVMVTANLSSFMKKGQTMDVNISSIGDSKSLLGGTLLLTPLKGADGRVYAMSQGNVVVSGISASGSDGSSVTVNVPSGGRIPNGATIEADIPNPFYYSNSLTYNLHNPDFTTAKRMSDAINELMGPGTAKAIDAGSVVVTAPKKLSQRVDYVSVLENIEFKPGEAMAKIIINARTGTVVISSNVIVKSAAVSHGNLVVSITETPVISQPNAFASGRTVSTQQSQVNIQQKNNRAFILPKGTTLKDIVRGINAVGATPADVISILEALQQAGALSATLIVI.

The signal sequence occupies residues 1-22 (MRRMLVIRWILAIHLIATQVFA).

The protein belongs to the FlgI family. The basal body constitutes a major portion of the flagellar organelle and consists of four rings (L,P,S, and M) mounted on a central rod.

It is found in the periplasm. Its subcellular location is the bacterial flagellum basal body. Assembles around the rod to form the L-ring and probably protects the motor/basal body from shearing forces during rotation. The protein is Flagellar P-ring protein of Legionella pneumophila subsp. pneumophila (strain Philadelphia 1 / ATCC 33152 / DSM 7513).